The following is a 125-amino-acid chain: Small ribosomal subunit protein uS12 (125 aa).

Asp89 carries the 3-methylthioaspartic acid modification.

It belongs to the universal ribosomal protein uS12 family. In terms of assembly, part of the 30S ribosomal subunit. Contacts proteins S8 and S17. May interact with IF1 in the 30S initiation complex.

Functionally, with S4 and S5 plays an important role in translational accuracy. Interacts with and stabilizes bases of the 16S rRNA that are involved in tRNA selection in the A site and with the mRNA backbone. Located at the interface of the 30S and 50S subunits, it traverses the body of the 30S subunit contacting proteins on the other side and probably holding the rRNA structure together. The combined cluster of proteins S8, S12 and S17 appears to hold together the shoulder and platform of the 30S subunit. This chain is Small ribosomal subunit protein uS12, found in Clostridium botulinum (strain Alaska E43 / Type E3).